A 101-amino-acid chain; its full sequence is MSNTQAERSIIGMIDMFHKYTGRDGKIEKPSLLTMMKENFPNFLSACDKKGIHYLATVFEKKDKNEDKKIDFSEFLSLLGDIAADYHKQSHGAAPCSGGSQ.

2 EF-hand domains span residues Met13–Asp48 and Lys50–Asp85. Residues His18, Glu28, and Glu38 each contribute to the Zn(2+) site. Residues Asp63 and Asn65 each contribute to the Ca(2+) site. Glu66 is a Zn(2+) binding site. Residues Asp67, Lys69, and Glu74 each contribute to the Ca(2+) site. Residues His87 and His91 each contribute to the Zn(2+) site.

This sequence belongs to the S-100 family. Overexpressed in psoriasis.

It is found in the cytoplasm. Its function is as follows. May be involved in epidermal differentiation and inflammation and might therefore be important for the pathogenesis of psoriasis and other diseases. The sequence is that of Protein S100-A7A (S100A7A) from Homo sapiens (Human).